A 443-amino-acid chain; its full sequence is 3-phosphoshikimate 1-carboxyvinyltransferase (443 aa).

The disordered stretch occupies residues 1–25; it reads MSHSAEPLPMTARRSGPLTGEAQVP. 3-phosphoshikimate is bound by residues lysine 28, serine 29, and arginine 33. Residue lysine 28 coordinates phosphoenolpyruvate. Residues glycine 101 and arginine 129 each coordinate phosphoenolpyruvate. Residues serine 174, glutamine 176, aspartate 326, and lysine 353 each contribute to the 3-phosphoshikimate site. Glutamine 176 provides a ligand contact to phosphoenolpyruvate. Residue aspartate 326 is the Proton acceptor of the active site. Phosphoenolpyruvate is bound by residues arginine 357 and arginine 400.

This sequence belongs to the EPSP synthase family. As to quaternary structure, monomer.

It is found in the cytoplasm. The enzyme catalyses 3-phosphoshikimate + phosphoenolpyruvate = 5-O-(1-carboxyvinyl)-3-phosphoshikimate + phosphate. It functions in the pathway metabolic intermediate biosynthesis; chorismate biosynthesis; chorismate from D-erythrose 4-phosphate and phosphoenolpyruvate: step 6/7. Functionally, catalyzes the transfer of the enolpyruvyl moiety of phosphoenolpyruvate (PEP) to the 5-hydroxyl of shikimate-3-phosphate (S3P) to produce enolpyruvyl shikimate-3-phosphate and inorganic phosphate. This chain is 3-phosphoshikimate 1-carboxyvinyltransferase, found in Paracoccus denitrificans (strain Pd 1222).